A 188-amino-acid chain; its full sequence is Putative 3-methyladenine DNA glycosylase (188 aa).

It belongs to the DNA glycosylase MPG family.

In Ehrlichia ruminantium (strain Gardel), this protein is Putative 3-methyladenine DNA glycosylase.